Reading from the N-terminus, the 633-residue chain is Glutamyl-tRNA(Gln) amidotransferase subunit E (633 aa).

The protein belongs to the GatB/GatE family. GatE subfamily. Heterodimer of GatD and GatE.

It carries out the reaction L-glutamyl-tRNA(Gln) + L-glutamine + ATP + H2O = L-glutaminyl-tRNA(Gln) + L-glutamate + ADP + phosphate + H(+). Its function is as follows. Allows the formation of correctly charged Gln-tRNA(Gln) through the transamidation of misacylated Glu-tRNA(Gln) in organisms which lack glutaminyl-tRNA synthetase. The reaction takes place in the presence of glutamine and ATP through an activated gamma-phospho-Glu-tRNA(Gln). The GatDE system is specific for glutamate and does not act on aspartate. This is Glutamyl-tRNA(Gln) amidotransferase subunit E from Methanosarcina acetivorans (strain ATCC 35395 / DSM 2834 / JCM 12185 / C2A).